Reading from the N-terminus, the 1435-residue chain is Dicer-like protein 2 (1435 aa).

In terms of domain architecture, Helicase ATP-binding spans 54–234 (MLSESLRQNI…LEVLEINLNA (181 aa)). 67-74 (MDTGSGKT) is a binding site for ATP. The DEAH box signature appears at 175–178 (DEAH). Residues 400–564 (KLIDFLVLEH…ENKRALEHIQ (165 aa)) enclose the Helicase C-terminal domain. The Dicer dsRNA-binding fold domain maps to 591-684 (ARNHLSHFCG…MPAHHHIDDE (94 aa)). 2 consecutive RNase III domains span residues 956 to 1099 (ANEL…IDGG) and 1141 to 1323 (LSEI…IDSQ). Mg(2+)-binding residues include glutamate 1178, aspartate 1309, and glutamate 1312.

The protein belongs to the helicase family. Dicer subfamily. Requires Mg(2+) as cofactor. Mn(2+) is required as a cofactor.

Dicer-like endonuclease involved in cleaving double-stranded RNA in the RNA interference (RNAi) pathway. Produces 21 to 25 bp dsRNAs (siRNAs) which target the selective destruction of homologous RNAs leading to sequence-specific suppression of gene expression, called post-transcriptional gene silencing (PTGS). Part of a broad host defense response against viral infection and transposons. This is Dicer-like protein 2 (DCL2) from Coccidioides immitis (strain RS) (Valley fever fungus).